Here is a 314-residue protein sequence, read N- to C-terminus: MLDRIASIKKAPDEEYYVPGHRTCAGCGPALTYRLVAKAAGPNTIFIGPTGCMYVANTSYGCGPWRVPWIHAQITNGGAVASGIEAAYKAMIRKKKTDAEFPNIIVMAGDGGAVDIGLQALSAMLYRGHDVLFICYDNESYANTGIQTSPTTPYGANTTFTPPGEVVPEGKKLFPKDNPKVIAHGHPELKYVATASIGWPVDLMNKVRKGLNQEGPAYIHIHAPCPKGWQFPADKTIEMAKLAVQTGMFQLYEYENGEYKLSVKVDKRKPVSEYMKLQKRFAHLKPEHIAKMQAFVDARCAEVGITVPVVASNA.

Residues Cys-24, Cys-27, Cys-52, and Cys-225 each coordinate [4Fe-4S] cluster.

Dimer of heterotrimer of one alpha, one beta and one delta subunit. [4Fe-4S] cluster serves as cofactor.

The catalysed reaction is oxidized 2[4Fe-4S]-[ferredoxin] + oxalate = reduced 2[4Fe-4S]-[ferredoxin] + 2 CO2. Its function is as follows. Catalyzes the anaerobic oxidation of oxalate using a broad range of electron acceptors, including ferredoxin and the nickel-dependent carbon monoxide dehydrogenase. Does not require coenzyme A as cosubstrate. Enables anaerobic growth on oxalate which is used as energy source by the bacteria. The chain is Oxalate oxidoreductase subunit beta from Moorella thermoacetica (strain ATCC 39073 / JCM 9320).